Here is a 262-residue protein sequence, read N- to C-terminus: Acyl-[acyl-carrier-protein]--UDP-N-acetylglucosamine O-acyltransferase (262 aa).

Belongs to the transferase hexapeptide repeat family. LpxA subfamily. As to quaternary structure, homotrimer.

The protein localises to the cytoplasm. The enzyme catalyses a (3R)-hydroxyacyl-[ACP] + UDP-N-acetyl-alpha-D-glucosamine = a UDP-3-O-[(3R)-3-hydroxyacyl]-N-acetyl-alpha-D-glucosamine + holo-[ACP]. It participates in glycolipid biosynthesis; lipid IV(A) biosynthesis; lipid IV(A) from (3R)-3-hydroxytetradecanoyl-[acyl-carrier-protein] and UDP-N-acetyl-alpha-D-glucosamine: step 1/6. Its function is as follows. Involved in the biosynthesis of lipid A, a phosphorylated glycolipid that anchors the lipopolysaccharide to the outer membrane of the cell. The sequence is that of Acyl-[acyl-carrier-protein]--UDP-N-acetylglucosamine O-acyltransferase from Burkholderia mallei (strain NCTC 10247).